The chain runs to 236 residues: ATP synthase subunit a (236 aa).

5 helical membrane-spanning segments follow: residues 18–38, 79–99, 112–132, 174–194, and 205–227; these read STVM…FIST, GITL…FSIV, DPTV…FYGV, IYAG…GAVG, and WQGF…TMVY.

It belongs to the ATPase A chain family. F-type ATPases have 2 components, CF(1) - the catalytic core - and CF(0) - the membrane proton channel. CF(1) has five subunits: alpha(3), beta(3), gamma(1), delta(1), epsilon(1). CF(0) has three main subunits: a(1), b(2) and c(9-12). The alpha and beta chains form an alternating ring which encloses part of the gamma chain. CF(1) is attached to CF(0) by a central stalk formed by the gamma and epsilon chains, while a peripheral stalk is formed by the delta and b chains.

It is found in the cell membrane. Its function is as follows. Key component of the proton channel; it plays a direct role in the translocation of protons across the membrane. This is ATP synthase subunit a from Lysinibacillus sphaericus (strain C3-41).